The primary structure comprises 296 residues: Protoheme IX farnesyltransferase (296 aa).

Topologically, residues 1-9 (MMFKQYLQV) are cytoplasmic. Residues 10–28 (TKPGIIFGNLISVIGGFLL) form a helical membrane-spanning segment. The Periplasmic portion of the chain corresponds to 29–37 (ASKGSIDYP). Residues 38-56 (LFIYTLVGVSLVVASGCVF) traverse the membrane as a helical segment. The Cytoplasmic portion of the chain corresponds to 57–78 (NNYIDRDIDRKMERTKNRVLVK). A helical transmembrane segment spans residues 79-97 (GLISPAVSLVYATLLGIAG). Residues 98 to 107 (FMLLWFGANP) are Periplasmic-facing. The helical transmembrane segment at 108–126 (LACWLGVMGFVVYVGVYSL) threads the bilayer. Residues 127–197 (YMKRHSVYGT…YQAANIPVLP (71 aa)) are Cytoplasmic-facing. Residues 198-216 (VVKGISVAKNHITLYIIAF) traverse the membrane as a helical segment. The Periplasmic portion of the chain corresponds to 217–228 (AVATLMLSLGGY). Residues 229 to 247 (AGYKYLVVAAAVSVWWLGM) traverse the membrane as a helical segment. Over 248 to 268 (ALRGYKVADDRIWARKLFGFS) the chain is Cytoplasmic. The chain crosses the membrane as a helical span at residues 269-287 (IIAITALSVMMSVDFMVPD). The Periplasmic portion of the chain corresponds to 288-296 (SHTLLAAVW).

This sequence belongs to the UbiA prenyltransferase family. Protoheme IX farnesyltransferase subfamily.

It is found in the cell inner membrane. It carries out the reaction heme b + (2E,6E)-farnesyl diphosphate + H2O = Fe(II)-heme o + diphosphate. The protein operates within porphyrin-containing compound metabolism; heme O biosynthesis; heme O from protoheme: step 1/1. Its function is as follows. Converts heme B (protoheme IX) to heme O by substitution of the vinyl group on carbon 2 of heme B porphyrin ring with a hydroxyethyl farnesyl side group. The sequence is that of Protoheme IX farnesyltransferase from Shigella flexneri.